The sequence spans 150 residues: Large ribosomal subunit protein bL9 (150 aa).

This sequence belongs to the bacterial ribosomal protein bL9 family.

Functionally, binds to the 23S rRNA. The sequence is that of Large ribosomal subunit protein bL9 from Pectobacterium carotovorum subsp. carotovorum (strain PC1).